The primary structure comprises 712 residues: Polyribonucleotide nucleotidyltransferase (712 aa).

Residues Asp-484 and Asp-490 each contribute to the Mg(2+) site. A KH domain is found at 550–609 (PKYKTMDVNPEKIRVLIGPGGKNIKAIIEETGSDVEIQDSGVVNIFAPDTPTLDKTIKLI). Residues 619–686 (GEVYDGIVKD…KGGKYSLSRK (68 aa)) form the S1 motif domain.

Belongs to the polyribonucleotide nucleotidyltransferase family. Mg(2+) serves as cofactor.

The protein localises to the cytoplasm. The enzyme catalyses RNA(n+1) + phosphate = RNA(n) + a ribonucleoside 5'-diphosphate. Involved in mRNA degradation. Catalyzes the phosphorolysis of single-stranded polyribonucleotides processively in the 3'- to 5'-direction. The chain is Polyribonucleotide nucleotidyltransferase from Brachyspira hyodysenteriae (strain ATCC 49526 / WA1).